The following is a 91-amino-acid chain: Putative ribonuclease inhibitor YrdF (91 aa).

This sequence belongs to the barstar family.

The protein localises to the cytoplasm. This chain is Putative ribonuclease inhibitor YrdF (yrdF), found in Bacillus subtilis (strain 168).